The chain runs to 562 residues: Undecaprenyl phosphate-alpha-4-amino-4-deoxy-L-arabinose arabinosyl transferase (562 aa).

The next 12 helical transmembrane spans lie at 14-34 (IKFS…PLNY), 91-111 (FSVR…IYLF), 120-140 (ILSL…IIGT), 142-162 (SVLD…FWLA), 186-206 (FITK…IWLF), 215-235 (TIIH…PWIY), 267-287 (PFWY…GFLF), 302-322 (IEFY…ISKG), 324-344 (LPTY…KNIE), 354-374 (LLKI…IFII), 395-415 (LILC…IIFN), and 425-445 (LSII…IIYA).

Belongs to the glycosyltransferase 83 family.

It is found in the cell inner membrane. It carries out the reaction 4-amino-4-deoxy-alpha-L-arabinopyranosyl di-trans,octa-cis-undecaprenyl phosphate + lipid IVA = lipid IIA + di-trans,octa-cis-undecaprenyl phosphate.. Its pathway is lipopolysaccharide metabolism; 4-amino-4-deoxy-beta-L-arabinose-lipid A biosynthesis. In terms of biological role, catalyzes the transfer of the L-Ara4N moiety of the glycolipid undecaprenyl phosphate-alpha-L-Ara4N to lipid A. The modified arabinose is attached to lipid A and is required for resistance to polymyxin and cationic antimicrobial peptides. The polypeptide is Undecaprenyl phosphate-alpha-4-amino-4-deoxy-L-arabinose arabinosyl transferase (Wigglesworthia glossinidia brevipalpis).